The chain runs to 222 residues: Transmembrane protein 114 (222 aa).

The helical transmembrane segment at 7–27 (ALAGAAALSGALSFVLLAAAI) threads the bilayer. Asn-54 and Asn-88 each carry an N-linked (GlcNAc...) asparagine glycan. 3 consecutive transmembrane segments (helical) span residues 105 to 125 (FVIL…TGFL), 133 to 153 (LLLL…LTGI), and 188 to 208 (LALG…FLAA).

Its subcellular location is the cell junction. It is found in the tight junction. The protein localises to the lateral cell membrane. It localises to the apical cell membrane. This Mus musculus (Mouse) protein is Transmembrane protein 114.